The chain runs to 581 residues: FAD-dependent monooxygenase DEP4 (581 aa).

Residue 43 to 46 (VWSK) participates in FAD binding. 54–56 (FAQ) contributes to the NADP(+) binding site. Valine 108 is an FAD binding site. Residues 183 to 202 (VGRS…EGKR), 219 to 220 (AP), and 351 to 352 (DI) each bind NADP(+). Methionine 470 is an FAD binding site.

It belongs to the FAD-binding monooxygenase family. FAD is required as a cofactor.

It participates in polyketide biosynthesis. Functionally, FAD-dependent monooxygenase; part of the gene cluster that mediates the biosynthesis of depudecin, a highly oxidized eleven-carbon linear polyketide that acts as a histone deacetylase (HDAC) inhibitor and makes a small contribution to pathogenesis. The reducing polyketide synthase DEP5 is the central enzyme in depudecin biosynthesis by yielding the backbone polyketide chain. The monooxygenases DEP2 and DEP4, as well as the uncharacterized protein DEP1, then act as tailoring enzymes to modify the intermediate polyketide chain into depudecin. The protein is FAD-dependent monooxygenase DEP4 of Alternaria brassicicola (Dark leaf spot agent).